Reading from the N-terminus, the 378-residue chain is Putative glutamate--cysteine ligase 2-1 (378 aa).

It belongs to the glutamate--cysteine ligase type 2 family. YbdK subfamily.

The catalysed reaction is L-cysteine + L-glutamate + ATP = gamma-L-glutamyl-L-cysteine + ADP + phosphate + H(+). ATP-dependent carboxylate-amine ligase which exhibits weak glutamate--cysteine ligase activity. The polypeptide is Putative glutamate--cysteine ligase 2-1 (Corynebacterium efficiens (strain DSM 44549 / YS-314 / AJ 12310 / JCM 11189 / NBRC 100395)).